Here is a 202-residue protein sequence, read N- to C-terminus: MEAYINLFIKSVFIENMALSFFLGMCTFIAVSKKIETAVGLGIAVVIVQTLTVPANNLIYTYLLKEGALSWAGLHDVDLSFIALMACIGVIAAMVQILEMVLDKFFPALYNALGIFLPLITVNCAILAGSLFMIERDYNFSESVVYGVGSGFGWALAITAMAGVREKLKYSDVPAGLRGLGITFISAGLMALGFMAFSGIQL.

6 helical membrane passes run 11 to 31, 35 to 55, 81 to 101, 114 to 134, 144 to 164, and 180 to 200; these read SVFIENMALSFFLGMCTFIAV, IETAVGLGIAVVIVQTLTVPA, FIALMACIGVIAAMVQILEMV, GIFLPLITVNCAILAGSLFMI, VVYGVGSGFGWALAITAMAGV, and LGITFISAGLMALGFMAFSGI.

This sequence belongs to the NqrDE/RnfAE family. As to quaternary structure, composed of six subunits; NqrA, NqrB, NqrC, NqrD, NqrE and NqrF.

The protein resides in the cell inner membrane. It carries out the reaction a ubiquinone + n Na(+)(in) + NADH + H(+) = a ubiquinol + n Na(+)(out) + NAD(+). NQR complex catalyzes the reduction of ubiquinone-1 to ubiquinol by two successive reactions, coupled with the transport of Na(+) ions from the cytoplasm to the periplasm. NqrA to NqrE are probably involved in the second step, the conversion of ubisemiquinone to ubiquinol. In Methylococcus capsulatus (strain ATCC 33009 / NCIMB 11132 / Bath), this protein is Na(+)-translocating NADH-quinone reductase subunit E.